The sequence spans 278 residues: Urease accessory protein UreD 1 (278 aa).

It belongs to the UreD family. In terms of assembly, ureD, UreF and UreG form a complex that acts as a GTP-hydrolysis-dependent molecular chaperone, activating the urease apoprotein by helping to assemble the nickel containing metallocenter of UreC. The UreE protein probably delivers the nickel.

Its subcellular location is the cytoplasm. Functionally, required for maturation of urease via the functional incorporation of the urease nickel metallocenter. This is Urease accessory protein UreD 1 from Bradyrhizobium sp. (strain ORS 278).